The sequence spans 98 residues: Dehydrin HIRD11 (98 aa).

The segment at 1–98 is disordered; it reads MAGLINKIGD…HSSSSDSDSD (98 aa). Basic and acidic residues predominate over residues 19-72; that stretch reads KEGEHKKEEEHKKHVDEHKSGEHKEGIVDKIKDKIHGGEGKSHDGEGKSHDGEK. Residues 73–82 are compositionally biased toward basic residues; the sequence is KKKKDKKEKK.

It belongs to the KS-type dehydrin family. In terms of assembly, interacts with PXL1. Phosphorylated in vivo. Phosphorylated in vitro by PXL1. Highly expressed in the cambial zone of the stem vasculature (at protein level). Expressed in roots, rosettes leaves, stems, cauline leaves, flowers and siliques.

The protein resides in the cytoplasm. The protein localises to the nucleus. Functionally, intrinsically disordered and metal-binding protein. Binds to the divalent cations cobalt, nickel, copper and zinc, but not to magnesium, calcium, manganese or cadmium. Binding to metal ions decreases disordered state, decreases susceptibility to trypsin and promotes self-association. Can reduce the formation of reactive oxygen species (ROS) in a copper-ascorbate in vitro system. This Arabidopsis thaliana (Mouse-ear cress) protein is Dehydrin HIRD11.